A 67-amino-acid polypeptide reads, in one-letter code: Disintegrin EC3A (67 aa).

In terms of domain architecture, Disintegrin spans 1 to 65; the sequence is NSVHPCCDPV…DCPRNRYKGK (65 aa). Cystine bridges form between Cys-6-Cys-29, Cys-20-Cys-26, Cys-25-Cys-50, and Cys-38-Cys-57. The short motif at 42–44 is the Cell attachment site; atypical (VGD) element; the sequence is VGD.

It belongs to the venom metalloproteinase (M12B) family. P-II subfamily. P-IIe sub-subfamily. In terms of assembly, heterodimer with EC3B; disulfide-linked. Expressed by the venom gland.

Its subcellular location is the secreted. Functionally, inhibits adhesion of cells expressing alpha-4/beta-1 (ITGA4/ITGB1) and alpha-4/beta-7 (ITGA4/ITGB7) integrins to the natural ligands vascular cell adhesion molecule 1 (VCAM-1) and mucosal addressin cell adhesion molecule 1 (MADCAM-1). It is also a weaker inhibitor of alpha-5/beta-1 (ITGA5/ITGB1) and alpha-2b/beta-3 (ITGA2B/ITGB3) integrins. The inhibitory activity of EC3 towards alpha-4 integrins is associated with the MLD sequence of EC3B subunit. The ability of EC3 to inhibit ITGA5/ITGB1 resides in both subunits A and B. The sequence is that of Disintegrin EC3A from Echis carinatus (Saw-scaled viper).